Reading from the N-terminus, the 260-residue chain is Acyl-[acyl-carrier-protein]--UDP-N-acetylglucosamine O-acyltransferase (260 aa).

Belongs to the transferase hexapeptide repeat family. LpxA subfamily. In terms of assembly, homotrimer.

The protein resides in the cytoplasm. The enzyme catalyses a (3R)-hydroxyacyl-[ACP] + UDP-N-acetyl-alpha-D-glucosamine = a UDP-3-O-[(3R)-3-hydroxyacyl]-N-acetyl-alpha-D-glucosamine + holo-[ACP]. It functions in the pathway glycolipid biosynthesis; lipid IV(A) biosynthesis; lipid IV(A) from (3R)-3-hydroxytetradecanoyl-[acyl-carrier-protein] and UDP-N-acetyl-alpha-D-glucosamine: step 1/6. Its function is as follows. Involved in the biosynthesis of lipid A, a phosphorylated glycolipid that anchors the lipopolysaccharide to the outer membrane of the cell. The chain is Acyl-[acyl-carrier-protein]--UDP-N-acetylglucosamine O-acyltransferase from Aliarcobacter butzleri (strain RM4018) (Arcobacter butzleri).